Consider the following 1089-residue polypeptide: Importin subunit beta-3 (1089 aa).

Ser-2 is subject to N-acetylserine. HEAT repeat units follow at residues 6–39 (EEVN…EEWI), 44–78 (IEYL…ALKA), 96–129 (KEVL…IAEC), 138–165 (PELL…ILTT), 175–207 (INSI…YFKQ), 216–252 (LGIL…LVEL), 260–295 (MFDQ…FSEN), 304–359 (QNYG…ALKL), 361–395 (GEYL…SSAA), 399–439 (ADVL…STDF), 441–481 (PFIQ…FSEF), 484–524 (KDIL…AEAA), 526–568 (NKFI…GFAV), 571–613 (EKFH…CRIL), 615–689 (DDFV…ATLL), 692–735 (QFAV…LLAA), 742–781 (ELVL…IKVM), 788–849 (EDQL…LKTT), 852–890 (HYLK…IQYG), 898–930 (KNAF…CAQY), 938–978 (VCIP…LYAY), 986–1017 (DTYT…QLIE), 1028–1063 (NISA…LLGF), and 1066–1089 (SSDA…KWFA). A Phosphothreonine modification is found at Thr-830.

It belongs to the importin beta family. Importin beta-3 subfamily. Interacts with Ran (GSP1); interacts specifically with the GTP-bound form of Ran (GTP-Ran), protecting it from GTP hydrolysis and nucleotide exchange. Interacts with RPL25; this interaction is dissociated by binding to Ran-GTP. Interacts with YAP1; this interaction is dissociated by binding to Ran-GTP. Interacts with NOP1; via its rg-NLS. Interacts with SOF1; via its cNLS. Interacts with histones H3 and H4; via their NLS. Interacts with ABF1.

It localises to the cytoplasm. The protein localises to the nucleus. Functions in nuclear protein import as nuclear transport receptor. Serves as receptor for classical and arginine/glycine-rich nuclear localization signals (cNLS and rg-NLS) in cargo substrates. Its predominant cargo substrate seems to be ribosomal proteins and ribosome biogenesis trans- and cis-acting factors. Required for nuclear transport of YAP1, NOP1 and SOF1. Mediates the nuclear import of histones H3 and H4. Mediates docking of the importin/substrate complex to the nuclear pore complex (NPC) through binding to repeat-containing nucleoporins. The complex is subsequently translocated through the pore by an energy requiring, Ran-dependent mechanism. At the nucleoplasmic side of the NPC, GTP-Ran binding leads to release of the cargo. The importin is re-exported from the nucleus to the cytoplasm where GTP hydrolysis releases Ran from importin. The directionality of nuclear import is thought to be conferred by an asymmetric distribution of the GTP- and GDP-bound forms of Ran between the cytoplasm and nucleus. Functionally, plays a role in protein secretion. The sequence is that of Importin subunit beta-3 from Saccharomyces cerevisiae (strain ATCC 204508 / S288c) (Baker's yeast).